The chain runs to 402 residues: Adenylyltransferase and sulfurtransferase MOCS3 (402 aa).

ATP contacts are provided by residues glycine 47, aspartate 68, 75–79 (DNLHR), lysine 92, and 136–137 (DN). Cysteine 178 and cysteine 181 together coordinate Zn(2+). Residue cysteine 195 is the Glycyl thioester intermediate; for adenylyltransferase activity of the active site. Zn(2+)-binding residues include cysteine 253 and cysteine 256. Residues 303–400 (AARKQFLLDT…WALKINDEFP (98 aa)) enclose the Rhodanese domain. The active-site Cysteine persulfide intermediate; for sulfurtransferase activity is the cysteine 359.

In the N-terminal section; belongs to the HesA/MoeB/ThiF family. UBA4 subfamily. It depends on Zn(2+) as a cofactor.

Its subcellular location is the cytoplasm. The protein resides in the cytosol. It catalyses the reaction [molybdopterin-synthase sulfur-carrier protein]-C-terminal Gly-Gly + ATP + H(+) = [molybdopterin-synthase sulfur-carrier protein]-C-terminal Gly-Gly-AMP + diphosphate. The enzyme catalyses [molybdopterin-synthase sulfur-carrier protein]-C-terminal Gly-Gly-AMP + S-sulfanyl-L-cysteinyl-[cysteine desulfurase] + AH2 = [molybdopterin-synthase sulfur-carrier protein]-C-terminal-Gly-aminoethanethioate + L-cysteinyl-[cysteine desulfurase] + A + AMP + 2 H(+). Its pathway is tRNA modification; 5-methoxycarbonylmethyl-2-thiouridine-tRNA biosynthesis. It functions in the pathway cofactor biosynthesis; molybdopterin biosynthesis. Plays a central role in 2-thiolation of mcm(5)S(2)U at tRNA wobble positions of cytosolic tRNA(Lys), tRNA(Glu) and tRNA(Gln). Also essential during biosynthesis of the molybdenum cofactor. Acts by mediating the C-terminal thiocarboxylation of sulfur carriers URM1 and MOCS2A. Its N-terminus first activates URM1 and MOCS2A as acyl-adenylates (-COAMP), then the persulfide sulfur on the catalytic cysteine is transferred to URM1 and MOCS2A to form thiocarboxylation (-COSH) of their C-terminus. The reaction probably involves hydrogen sulfide that is generated from the persulfide intermediate and that acts as a nucleophile towards URM1 and MOCS2A. Subsequently, a transient disulfide bond is formed. Does not use thiosulfate as sulfur donor; NFS1 probably acting as a sulfur donor for thiocarboxylation reactions. The protein is Adenylyltransferase and sulfurtransferase MOCS3 of Caenorhabditis briggsae.